The following is a 1486-amino-acid chain: Chromosome partition protein MukB (1486 aa).

Residue glycine 34–serine 41 coordinates ATP. Coiled-coil stretches lie at residues leucine 326–glutamine 418, leucine 444–glutamine 480, and arginine 509–valine 603. The segment at proline 666–arginine 783 is flexible hinge. 3 coiled-coil regions span residues glutamate 835–glutamate 923, glutamate 977–alanine 1115, and valine 1209–serine 1266.

Belongs to the SMC family. MukB subfamily. As to quaternary structure, homodimerization via its hinge domain. Binds to DNA via its C-terminal region. Interacts, and probably forms a ternary complex, with MukE and MukF via its C-terminal region. The complex formation is stimulated by calcium or magnesium. Interacts with tubulin-related protein FtsZ.

The protein localises to the cytoplasm. It localises to the nucleoid. Functionally, plays a central role in chromosome condensation, segregation and cell cycle progression. Functions as a homodimer, which is essential for chromosome partition. Involved in negative DNA supercoiling in vivo, and by this means organize and compact chromosomes. May achieve or facilitate chromosome segregation by condensation DNA from both sides of a centrally located replisome during cell division. This Shigella flexneri serotype 5b (strain 8401) protein is Chromosome partition protein MukB.